The following is a 300-amino-acid chain: 33 kDa chaperonin (300 aa).

2 disulfides stabilise this stretch: Cys240–Cys242 and Cys273–Cys276.

This sequence belongs to the HSP33 family. In terms of processing, under oxidizing conditions two disulfide bonds are formed involving the reactive cysteines. Under reducing conditions zinc is bound to the reactive cysteines and the protein is inactive.

It localises to the cytoplasm. Redox regulated molecular chaperone. Protects both thermally unfolding and oxidatively damaged proteins from irreversible aggregation. Plays an important role in the bacterial defense system toward oxidative stress. The protein is 33 kDa chaperonin of Cyanothece sp. (strain PCC 7425 / ATCC 29141).